The primary structure comprises 176 residues: Protein MOTHER of FT and TFL1 homolog 1 (176 aa).

Belongs to the phosphatidylethanolamine-binding protein family.

May form complexes with phosphorylated ligands by interfering with kinases and their effectors. The protein is Protein MOTHER of FT and TFL1 homolog 1 of Oryza sativa subsp. japonica (Rice).